Here is a 303-residue protein sequence, read N- to C-terminus: Sporulation regulatory protein (303 aa).

A FtsK domain is found at 26-213 (TGRLRAGLRK…HRVNDKQTAE (188 aa)). Residue 43–50 (GANHSGKS) participates in ATP binding.

Involved in sporulation inhibition and pock formation. This chain is Sporulation regulatory protein (spi), found in Streptomyces azureus.